Here is a 104-residue protein sequence, read N- to C-terminus: UPF0235 protein MTH_637 (104 aa).

It belongs to the UPF0235 family.

The chain is UPF0235 protein MTH_637 from Methanothermobacter thermautotrophicus (strain ATCC 29096 / DSM 1053 / JCM 10044 / NBRC 100330 / Delta H) (Methanobacterium thermoautotrophicum).